Consider the following 255-residue polypeptide: Geranylgeranylglyceryl phosphate synthase (255 aa).

Residues aspartate 26 and serine 55 each coordinate Mg(2+). Sn-glycerol 1-phosphate-binding positions include 174–180 (YLEAGSG), 205–206 (GG), and 227–228 (GT).

It belongs to the GGGP/HepGP synthase family. Group II subfamily. It depends on Mg(2+) as a cofactor.

It is found in the cytoplasm. It catalyses the reaction sn-glycerol 1-phosphate + (2E,6E,10E)-geranylgeranyl diphosphate = sn-3-O-(geranylgeranyl)glycerol 1-phosphate + diphosphate. Its pathway is membrane lipid metabolism; glycerophospholipid metabolism. Prenyltransferase that catalyzes the transfer of the geranylgeranyl moiety of geranylgeranyl diphosphate (GGPP) to the C3 hydroxyl of sn-glycerol-1-phosphate (G1P). This reaction is the first ether-bond-formation step in the biosynthesis of archaeal membrane lipids. This is Geranylgeranylglyceryl phosphate synthase from Thermococcus sibiricus (strain DSM 12597 / MM 739).